The following is a 134-amino-acid chain: Submaxillary gland androgen-regulated protein 3A (134 aa).

The signal sequence occupies residues 1-22 (MKSLTWILGLWALAACFTPGES). Residues 19 to 134 (PGESQRGPRG…TDPALPTPAP (116 aa)) form a disordered region. Composition is skewed to pro residues over residues 28–43 (GPYP…PPCF), 50–85 (VPPP…PPYG), and 94–119 (LPPP…PPFF).

The protein belongs to the PROL1/PROL3 family.

The protein resides in the secreted. May play a role in protection or detoxification. In Homo sapiens (Human), this protein is Submaxillary gland androgen-regulated protein 3A (SMR3A).